Here is a 339-residue protein sequence, read N- to C-terminus: Ketol-acid reductoisomerase (NADP(+)) (339 aa).

Positions 1 to 182 constitute a KARI N-terminal Rossmann domain; sequence MRVYYDRDAD…GGGRSGIIET (182 aa). Residues 24–27, arginine 48, serine 51, serine 53, and 83–86 contribute to the NADP(+) site; these read YGSQ and DELQ. Histidine 108 is an active-site residue. Glycine 134 contributes to the NADP(+) binding site. The KARI C-terminal knotted domain occupies 183-328; sequence TFREECETDL…EKLRAMMPWI (146 aa). Mg(2+) contacts are provided by aspartate 191, glutamate 195, glutamate 227, and glutamate 231. Substrate is bound at residue serine 252.

It belongs to the ketol-acid reductoisomerase family. Requires Mg(2+) as cofactor.

It carries out the reaction (2R)-2,3-dihydroxy-3-methylbutanoate + NADP(+) = (2S)-2-acetolactate + NADPH + H(+). The enzyme catalyses (2R,3R)-2,3-dihydroxy-3-methylpentanoate + NADP(+) = (S)-2-ethyl-2-hydroxy-3-oxobutanoate + NADPH + H(+). The protein operates within amino-acid biosynthesis; L-isoleucine biosynthesis; L-isoleucine from 2-oxobutanoate: step 2/4. It functions in the pathway amino-acid biosynthesis; L-valine biosynthesis; L-valine from pyruvate: step 2/4. Functionally, involved in the biosynthesis of branched-chain amino acids (BCAA). Catalyzes an alkyl-migration followed by a ketol-acid reduction of (S)-2-acetolactate (S2AL) to yield (R)-2,3-dihydroxy-isovalerate. In the isomerase reaction, S2AL is rearranged via a Mg-dependent methyl migration to produce 3-hydroxy-3-methyl-2-ketobutyrate (HMKB). In the reductase reaction, this 2-ketoacid undergoes a metal-dependent reduction by NADPH to yield (R)-2,3-dihydroxy-isovalerate. The protein is Ketol-acid reductoisomerase (NADP(+)) of Chelativorans sp. (strain BNC1).